We begin with the raw amino-acid sequence, 223 residues long: N-terminal Xaa-Pro-Lys N-methyltransferase 1 (223 aa).

Residues G69, R74, 91–93 (DVT), 119–120 (LQ), and Q135 each bind S-adenosyl-L-methionine.

The protein belongs to the methyltransferase superfamily. NTM1 family.

The protein localises to the nucleus. It carries out the reaction N-terminal L-alanyl-L-prolyl-L-lysyl-[protein] + 3 S-adenosyl-L-methionine = N-terminal N,N,N-trimethyl-L-alanyl-L-prolyl-L-lysyl-[protein] + 3 S-adenosyl-L-homocysteine + 3 H(+). It catalyses the reaction N-terminal L-seryl-L-prolyl-L-lysyl-[protein] + 3 S-adenosyl-L-methionine = N-terminal N,N,N-trimethyl-L-seryl-L-prolyl-L-lysyl-[protein] + 3 S-adenosyl-L-homocysteine + 3 H(+). The catalysed reaction is N-terminal L-prolyl-L-prolyl-L-lysyl-[protein] + 2 S-adenosyl-L-methionine = N-terminal N,N-dimethyl-L-prolyl-L-prolyl-L-lysyl-[protein] + 2 S-adenosyl-L-homocysteine + 2 H(+). In terms of biological role, distributive alpha-N-methyltransferase that methylates the N-terminus of target proteins containing the N-terminal motif [Ala/Gly/Pro/Ser]-Pro-Lys when the initiator Met is cleaved. Specifically catalyzes mono-, di- or tri-methylation of the exposed alpha-amino group of the Ala, Gly or Ser residue in the [Ala/Gly/Ser]-Pro-Lys motif and mono- or di-methylation of Pro in the Pro-Pro-Lys motif. Required during mitosis for normal bipolar spindle formation and chromosome segregation via its action on target proteins. In Danio rerio (Zebrafish), this protein is N-terminal Xaa-Pro-Lys N-methyltransferase 1 (ntmt1).